Reading from the N-terminus, the 218-residue chain is Adenylate kinase (218 aa).

11 to 16 (GAGKGT) provides a ligand contact to ATP. The segment at 31-60 (STGDMFREAMANKTKVGLEAKSYIDKGNLV) is NMP. Residues threonine 32, arginine 37, 58 to 60 (NLV), 86 to 89 (GFPR), and glutamine 93 each bind AMP. The tract at residues 127–165 (ARYMCKNCGATYNKISKQPKVEGTCDRCGSHEFYQREDD) is LID. Residue arginine 128 participates in ATP binding. Zn(2+) contacts are provided by cysteine 131 and cysteine 134. 137–138 (TY) contributes to the ATP binding site. Cysteine 151 and cysteine 154 together coordinate Zn(2+). 2 residues coordinate AMP: arginine 162 and arginine 173. Position 201 (glutamine 201) interacts with ATP.

The protein belongs to the adenylate kinase family. In terms of assembly, monomer.

It is found in the cytoplasm. It carries out the reaction AMP + ATP = 2 ADP. Its pathway is purine metabolism; AMP biosynthesis via salvage pathway; AMP from ADP: step 1/1. Functionally, catalyzes the reversible transfer of the terminal phosphate group between ATP and AMP. Plays an important role in cellular energy homeostasis and in adenine nucleotide metabolism. The polypeptide is Adenylate kinase (Lactobacillus acidophilus (strain ATCC 700396 / NCK56 / N2 / NCFM)).